The primary structure comprises 298 residues: MKRIGLFLLTNIAVLAVAMITMNLLGVGSYMQGTSLDLGNLFAFAAIIGFAGSFVSLAMSKWLAKMSVGAKVIKEPRNADEQWLVETVRRQAEKAGIGMPEVAIYEGAEPNAFATGMTKNSALVAVSTGLLRHMRQNEVEAVLGHEVAHIANGDMVTMALLQGVVNTFVIFFAKIVAYVVDRVVLKNESEGHSITFIVVDIVAQILFGILASMITMWFSRKREFHADNGGAYLAGKENMIAALQRLQTMQPGELPDQMAAFGISARPSNIGDLFRSHPPLEKRIEALRATTQDQLKVA.

A run of 2 helical transmembrane segments spans residues Ile-4–Leu-24 and Leu-38–Ala-58. His-145 contributes to the Zn(2+) binding site. The active site involves Glu-146. His-149 provides a ligand contact to Zn(2+). The next 2 helical transmembrane spans lie at Leu-160–Val-180 and Ile-194–Ile-214. Glu-223 contacts Zn(2+).

Belongs to the peptidase M48B family. Zn(2+) serves as cofactor.

It is found in the cell inner membrane. The sequence is that of Protease HtpX from Hydrogenovibrio crunogenus (strain DSM 25203 / XCL-2) (Thiomicrospira crunogena).